The primary structure comprises 303 residues: Diaminopimelate epimerase (303 aa).

Residue Asn-14 participates in substrate binding. A compositionally biased stretch (low complexity) spans 60-74; that stretch reads PVSSAGATADAAAGR. Residues 60 to 86 form a disordered region; the sequence is PVSSAGATADAAAGRPPQPSAGRPPQP. Residues 75 to 86 show a composition bias toward pro residues; it reads PPQPSAGRPPQP. Asn-97 is a binding site for substrate. Residue Cys-106 is the Proton donor of the active site. Substrate contacts are provided by residues 107–108, Asn-178, Asn-209, and 227–228; these read GN and ER. Cys-236 functions as the Proton acceptor in the catalytic mechanism. Residue 237 to 238 participates in substrate binding; that stretch reads GS.

It belongs to the diaminopimelate epimerase family. As to quaternary structure, homodimer.

It localises to the cytoplasm. It carries out the reaction (2S,6S)-2,6-diaminopimelate = meso-2,6-diaminopimelate. It functions in the pathway amino-acid biosynthesis; L-lysine biosynthesis via DAP pathway; DL-2,6-diaminopimelate from LL-2,6-diaminopimelate: step 1/1. Catalyzes the stereoinversion of LL-2,6-diaminopimelate (L,L-DAP) to meso-diaminopimelate (meso-DAP), a precursor of L-lysine and an essential component of the bacterial peptidoglycan. The protein is Diaminopimelate epimerase of Acidothermus cellulolyticus (strain ATCC 43068 / DSM 8971 / 11B).